A 118-amino-acid chain; its full sequence is Large ribosomal subunit protein eL18 (118 aa).

The protein belongs to the eukaryotic ribosomal protein eL18 family.

The chain is Large ribosomal subunit protein eL18 from Nanoarchaeum equitans (strain Kin4-M).